Here is a 501-residue protein sequence, read N- to C-terminus: Cytochrome P450 2J6 (501 aa).

Residue cysteine 447 coordinates heme.

The protein belongs to the cytochrome P450 family. It depends on heme as a cofactor.

The protein localises to the endoplasmic reticulum membrane. Its subcellular location is the microsome membrane. It catalyses the reaction an organic molecule + reduced [NADPH--hemoprotein reductase] + O2 = an alcohol + oxidized [NADPH--hemoprotein reductase] + H2O + H(+). This chain is Cytochrome P450 2J6 (Cyp2j6), found in Mus musculus (Mouse).